The chain runs to 188 residues: Elongation factor P (188 aa).

Residue lysine 34 is modified to N6-(3,6-diaminohexanoyl)-5-hydroxylysine.

The protein belongs to the elongation factor P family. May be beta-lysylated on the epsilon-amino group of Lys-34 by the combined action of EpmA and EpmB, and then hydroxylated on the C5 position of the same residue by EpmC (if this protein is present). Lysylation is critical for the stimulatory effect of EF-P on peptide-bond formation. The lysylation moiety may extend toward the peptidyltransferase center and stabilize the terminal 3-CCA end of the tRNA. Hydroxylation of the C5 position on Lys-34 may allow additional potential stabilizing hydrogen-bond interactions with the P-tRNA.

It is found in the cytoplasm. It functions in the pathway protein biosynthesis; polypeptide chain elongation. In terms of biological role, involved in peptide bond synthesis. Alleviates ribosome stalling that occurs when 3 or more consecutive Pro residues or the sequence PPG is present in a protein, possibly by augmenting the peptidyl transferase activity of the ribosome. Modification of Lys-34 is required for alleviation. This chain is Elongation factor P, found in Coxiella burnetii (strain CbuG_Q212) (Coxiella burnetii (strain Q212)).